We begin with the raw amino-acid sequence, 455 residues long: Glutamyl-tRNA reductase (455 aa).

Substrate is bound by residues 49 to 52, serine 109, 114 to 116, and glutamine 120; these read TCNR and ETQ. Catalysis depends on cysteine 50, which acts as the Nucleophile. An NADP(+)-binding site is contributed by 189–194; it reads GAGKMG.

It belongs to the glutamyl-tRNA reductase family. Homodimer.

The catalysed reaction is (S)-4-amino-5-oxopentanoate + tRNA(Glu) + NADP(+) = L-glutamyl-tRNA(Glu) + NADPH + H(+). It functions in the pathway porphyrin-containing compound metabolism; protoporphyrin-IX biosynthesis; 5-aminolevulinate from L-glutamyl-tRNA(Glu): step 1/2. In terms of biological role, catalyzes the NADPH-dependent reduction of glutamyl-tRNA(Glu) to glutamate 1-semialdehyde (GSA). The protein is Glutamyl-tRNA reductase of Geobacillus thermodenitrificans (strain NG80-2).